A 1287-amino-acid chain; its full sequence is DNA-directed RNA polymerase 147 kDa polypeptide (1287 aa).

It belongs to the poxviridae DNA-directed RNA polymerase 147 kDa subunit family. The DNA-dependent RNA polymerase used for intermediate and late genes expression consists of eight subunits Rpo30/OPG66, Rpo7/OPG90, Rpo22/OPG103, Rpo147/OPG105, Rpo18/OPG119, Rpo19/OPG131, Rpo132/OPG151 and Rpo35/OPG156. The same holoenzyme, with the addition of the transcription-specificity factor OPG109, is used for early gene expression.

It localises to the virion. The catalysed reaction is RNA(n) + a ribonucleoside 5'-triphosphate = RNA(n+1) + diphosphate. Functionally, part of the DNA-dependent RNA polymerase which catalyzes the transcription of viral DNA into RNA using the four ribonucleoside triphosphates as substrates. Responsible for the transcription of early, intermediate and late genes. DNA-dependent RNA polymerase associates with the early transcription factor (ETF), itself composed of OPG118 and OPG133, thereby allowing the early genes transcription. Late transcription, and probably also intermediate transcription, require newly synthesized RNA polymerase. The polypeptide is DNA-directed RNA polymerase 147 kDa polypeptide (OPG105) (Fowlpox virus (strain NVSL) (FPV)).